A 121-amino-acid polypeptide reads, in one-letter code: Holo-[acyl-carrier-protein] synthase (121 aa).

Mg(2+) contacts are provided by Asp5 and Glu50.

The protein belongs to the P-Pant transferase superfamily. AcpS family. Mg(2+) serves as cofactor.

It localises to the cytoplasm. The enzyme catalyses apo-[ACP] + CoA = holo-[ACP] + adenosine 3',5'-bisphosphate + H(+). In terms of biological role, transfers the 4'-phosphopantetheine moiety from coenzyme A to a Ser of acyl-carrier-protein. This chain is Holo-[acyl-carrier-protein] synthase, found in Sulfurimonas denitrificans (strain ATCC 33889 / DSM 1251) (Thiomicrospira denitrificans (strain ATCC 33889 / DSM 1251)).